The primary structure comprises 301 residues: Small ribosomal subunit protein uS2 (301 aa).

This sequence belongs to the universal ribosomal protein uS2 family.

In Acidobacterium capsulatum (strain ATCC 51196 / DSM 11244 / BCRC 80197 / JCM 7670 / NBRC 15755 / NCIMB 13165 / 161), this protein is Small ribosomal subunit protein uS2.